A 331-amino-acid chain; its full sequence is Pantothenate kinase (331 aa).

109–116 (GSVAVGKS) contributes to the ATP binding site.

This sequence belongs to the prokaryotic pantothenate kinase family.

It localises to the cytoplasm. It catalyses the reaction (R)-pantothenate + ATP = (R)-4'-phosphopantothenate + ADP + H(+). Its pathway is cofactor biosynthesis; coenzyme A biosynthesis; CoA from (R)-pantothenate: step 1/5. The polypeptide is Pantothenate kinase (Sinorhizobium fredii (strain NBRC 101917 / NGR234)).